The primary structure comprises 1357 residues: DNA-directed RNA polymerase subunit beta (1357 aa).

This sequence belongs to the RNA polymerase beta chain family. In terms of assembly, the RNAP catalytic core consists of 2 alpha, 1 beta, 1 beta' and 1 omega subunit. When a sigma factor is associated with the core the holoenzyme is formed, which can initiate transcription.

It carries out the reaction RNA(n) + a ribonucleoside 5'-triphosphate = RNA(n+1) + diphosphate. In terms of biological role, DNA-dependent RNA polymerase catalyzes the transcription of DNA into RNA using the four ribonucleoside triphosphates as substrates. The chain is DNA-directed RNA polymerase subunit beta from Nitrosomonas europaea (strain ATCC 19718 / CIP 103999 / KCTC 2705 / NBRC 14298).